Consider the following 88-residue polypeptide: Co-chaperonin GroES (88 aa).

Belongs to the GroES chaperonin family. Heptamer of 7 subunits arranged in a ring. Interacts with the chaperonin GroEL.

The protein resides in the cytoplasm. Its function is as follows. Together with the chaperonin GroEL, plays an essential role in assisting protein folding. The GroEL-GroES system forms a nano-cage that allows encapsulation of the non-native substrate proteins and provides a physical environment optimized to promote and accelerate protein folding. GroES binds to the apical surface of the GroEL ring, thereby capping the opening of the GroEL channel. The chain is Co-chaperonin GroES from Thermodesulfovibrio yellowstonii (strain ATCC 51303 / DSM 11347 / YP87).